The primary structure comprises 271 residues: Chymotrypsin-like elastase family member 2A (271 aa).

The signal sequence occupies residues 1 to 16 (MIRTLLLSALVAGALS). A propeptide spans 17–30 (CGYPTYEVEDDVSR) (activation peptide). A Peptidase S1 domain is found at 31–269 (VVGGQEATPN…YIDWINSVMA (239 aa)). A disulfide bridge connects residues cysteine 60 and cysteine 76. Catalysis depends on charge relay system residues histidine 75 and aspartate 123. 3 disulfide bridges follow: cysteine 157/cysteine 224, cysteine 188/cysteine 204, and cysteine 214/cysteine 245. Serine 218 serves as the catalytic Charge relay system.

The protein belongs to the peptidase S1 family. Elastase subfamily. Interacts with CPA1. Interacts with SERPINA1. As to expression, highly expressed in pancreas (at mRNA and protein levels). Also expressed in adrenal gland and small intestine.

It is found in the secreted. The catalysed reaction is Preferential cleavage: Leu-|-Xaa, Met-|-Xaa and Phe-|-Xaa. Hydrolyzes elastin.. In terms of biological role, elastase that enhances insulin signaling and might have a physiologic role in cellular glucose metabolism. Circulates in plasma and reduces platelet hyperactivation, triggers both insulin secretion and degradation, and increases insulin sensitivity. The chain is Chymotrypsin-like elastase family member 2A from Mus musculus (Mouse).